A 436-amino-acid chain; its full sequence is Cyclic GMP-AMP synthase (436 aa).

112 to 117 (QGSFQY) lines the GTP pocket. D131 and D133 together coordinate Mg(2+). An ATP-binding site is contributed by R182. D193 is a binding site for Mg(2+). S259 is a binding site for ATP. GTP is bound by residues K287, S301, and D348. Disordered stretches follow at residues 339–358 (RGVE…PSYK) and 417–436 (AQEP…MVSG). Residues 419 to 436 (EPSSASKPEKISSTMVSG) are compositionally biased toward polar residues. G436 participates in a covalent cross-link: Glycyl lysine isopeptide (Gly-Lys) (interchain with K-? in acceptor proteins).

The protein belongs to the CD-NTase family. A01 subfamily. In terms of assembly, monomer. Interacts with Cap2 in the presence and absence of phage T2. A Cap2 dimer is bound on either side by a DncV monomer. Mg(2+) is required as a cofactor. Post-translationally, in bacteria expressing capV-cdnD-cap2, this protein is conjugated to a number of other proteins (by Cap2 via this protein's C-terminal Gly residue), many of which are involved in metabolism. More conjugated protein is found in the absence of Cap3.

The catalysed reaction is GTP + ATP = 3',3'-cGAMP + 2 diphosphate. Its activity is regulated as follows. Primed for activation by Cap2 which conjugates it to cellular proteins; priming is target protein-specific (green fluorescent protein does not activate the enzyme), but which protein(s) activate is unclear. Enzymatic activity of DncV is inhibited by folate-like molecules, such as 5-methyltetrahydrofolate di-glutamate and 5-methyltetrahydrofolate, suggesting the existence of a signaling pathway that links folate-like metabolism cofactors to the regulation of cyclic dinucleotide second messenger synthesis. Lacks a regulatory loop and is constitutively activated. Cyclic nucleotide synthase (second messenger synthase) of a CBASS antivirus system. CBASS (cyclic oligonucleotide-based antiphage signaling system) provides immunity against bacteriophages. The CD-NTase protein (DncV, this protein) synthesizes cyclic nucleotides in response to infection; these serve as specific second messenger signals. The signals activate a diverse range of effectors, leading to bacterial cell death and thus abortive phage infection. A type II-A(GA) CBASS system. Functionally, catalyzes the synthesis of 3',3'-cyclic GMP-AMP (cGAMP), a second messenger in cell signal transduction, from GTP and ATP in response to phage infection. Also able to produce c-di-AMP and c-di-GMP from ATP and GTP, respectively; however, cGAMP is the dominant molecule produced by DncV in vivo, contrary to the 2'3'-cGAMP produced by eukaryotes. Is required for efficient V.cholerae intestinal colonization, and down-regulates the colonization-influencing process of chemotaxis. Is not active with dATP, TTP, UTP or CTP. Its product controls the activity of cGAMP-activated phospholipase CapV, a patatin-like lipase that is a direct cGAMP receptor encoded in the dncV operon. Its function is as follows. Protects E.coli against phage infection. When the CBASS operon (capV-dncV-cap2-cap3) is introduced in E.coli MG1655 there is about 100-fold protection against phages P1 and T2. When the operon is introduced in E.coli MG1655 there is a more than 10(3) decrease in the efficiency of T2 plaque formation. Protects 100-fold against phage T5, offers no protection against T7. When the operon is introduced in E.coli MG1655 it protects against phages T2, T4, T5 and T6. Another paper shows the operon confers protection against phages P1, T2, T5 and T6 but not T4 or lambda. In Vibrio cholerae serotype O1 (strain ATCC 39315 / El Tor Inaba N16961), this protein is Cyclic GMP-AMP synthase.